Consider the following 486-residue polypeptide: Transmembrane protein 39A (486 aa).

Asn-31 carries an N-linked (GlcNAc...) asparagine glycan. The next 8 helical transmembrane spans lie at Ser-72 to Ile-92, Thr-110 to Ala-130, Leu-155 to Val-175, Ser-182 to Phe-202, Glu-285 to Val-305, Cys-317 to Pro-337, Val-418 to Leu-438, and Asn-444 to Leu-464.

Belongs to the TMEM39 family. Interacts with SACM1L, SEC23A and SEC24A.

It localises to the endoplasmic reticulum membrane. In terms of biological role, regulates autophagy by controlling the spatial distribution and levels of the intracellular phosphatidylinositol 4-phosphate (PtdIns(4)P) pools. Modulates (PtdIns(4)P) levels by regulating the ER-to-Golgi trafficking of the phosphatidylinositide phosphatase SACM1L. In Mus musculus (Mouse), this protein is Transmembrane protein 39A (Tmem39a).